The primary structure comprises 346 residues: MEKLARKQVQALTPYLSARRIGGSGDVWLNANESPFDNEYQFNFARLNRYSECQPPELINAYAAYAKVKPEQVLTSRGADEGIELLVRAFCEPNQDAILYCPPTYGMYSISAETIGVETKTVPLTSNWQLDLPAIEASLENVKVVFVCSPNNPTGNIVDRKDILSLLEMTKDRAIVVMDEAYIDFCMEKSTVDLLVDYPHLAILRTLSKAFALAGLRCGFTLANEELINVLLKVIAPYPVPVPVAEIATQALSEAGLARMKYQMLDLSANRAYLQAGLMVLPGVTVFEGWGNYLLVKFPDGDSVFKAAWDHGIILRNSPIENCVRISVGNREECEKTLGFIRNQLI.

K209 carries the N6-(pyridoxal phosphate)lysine modification.

The protein belongs to the class-II pyridoxal-phosphate-dependent aminotransferase family. Histidinol-phosphate aminotransferase subfamily. As to quaternary structure, homodimer. Requires pyridoxal 5'-phosphate as cofactor.

It carries out the reaction L-histidinol phosphate + 2-oxoglutarate = 3-(imidazol-4-yl)-2-oxopropyl phosphate + L-glutamate. It participates in amino-acid biosynthesis; L-histidine biosynthesis; L-histidine from 5-phospho-alpha-D-ribose 1-diphosphate: step 7/9. The chain is Histidinol-phosphate aminotransferase from Aliivibrio fischeri (strain ATCC 700601 / ES114) (Vibrio fischeri).